The following is a 358-amino-acid chain: Protein FAM187B (358 aa).

A signal peptide spans 1-17 (MLATLWLVGLSLPMLWA). The Extracellular segment spans residues 18-322 (QRLISCPYKN…DKADSVLRRL (305 aa)). A glycan (N-linked (GlcNAc...) asparagine) is linked at N127. A helical transmembrane segment spans residues 323 to 343 (KLMVLSISVLAVGGLLCKVVF). At 344–358 (RPVCGKKRSQVLLVK) the chain is on the cytoplasmic side.

Belongs to the FAM187 family.

It localises to the membrane. The protein is Protein FAM187B (Fam187b) of Mus musculus (Mouse).